The chain runs to 631 residues: Dolichyl-diphosphooligosaccharide--protein glycosyltransferase subunit 2 (631 aa).

A signal peptide spans 1–22 (MAPPGSSAVFLLALTITASTQA). Over 23–540 (LTPTHYLTKH…REPEKRPPTV (518 aa)) the chain is Lumenal. Asn-106 carries N-linked (GlcNAc...) asparagine glycosylation. A Glycyl lysine isopeptide (Lys-Gly) (interchain with G-Cter in ubiquitin) cross-link involves residue Lys-154. Residues 541–561 (VSNTFTALILSPLLLLFALWI) form a helical membrane-spanning segment. Residues 562–571 (RIGANVSNFT) are Cytoplasmic-facing. Residues 572-592 (FAPSTVIFHLGHAAMLGLMYV) form a helical membrane-spanning segment. Residues 593–596 (YWTQ) are Lumenal-facing. Residues 597-617 (LNMFQTLKYLAVLGTVTFLAG) form a helical membrane-spanning segment. The Cytoplasmic portion of the chain corresponds to 618–631 (NRMLAQQAVKRTAH).

This sequence belongs to the SWP1 family. In terms of assembly, component of the oligosaccharyltransferase (OST) complex. OST exists in two different complex forms which contain common core subunits RPN1, RPN2, OST48, OST4, DAD1 and TMEM258, either STT3A or STT3B as catalytic subunits, and form-specific accessory subunits. STT3A complex assembly occurs through the formation of 3 subcomplexes. Subcomplex 1 contains RPN1 and TMEM258, subcomplex 2 contains the STT3A-specific subunits STT3A, DC2/OSTC, and KCP2 as well as the core subunit OST4, and subcomplex 3 contains RPN2, DAD1, and OST48. The STT3A complex can form stable complexes with the Sec61 complex or with both the Sec61 and TRAP complexes. Interacts with DDI2. Interacts with TMEM35A/NACHO.

Its subcellular location is the endoplasmic reticulum. It is found in the endoplasmic reticulum membrane. Its pathway is protein modification; protein glycosylation. Functionally, subunit of the oligosaccharyl transferase (OST) complex that catalyzes the initial transfer of a defined glycan (Glc(3)Man(9)GlcNAc(2) in eukaryotes) from the lipid carrier dolichol-pyrophosphate to an asparagine residue within an Asn-X-Ser/Thr consensus motif in nascent polypeptide chains, the first step in protein N-glycosylation. N-glycosylation occurs cotranslationally and the complex associates with the Sec61 complex at the channel-forming translocon complex that mediates protein translocation across the endoplasmic reticulum (ER). All subunits are required for a maximal enzyme activity. This is Dolichyl-diphosphooligosaccharide--protein glycosyltransferase subunit 2 from Rattus norvegicus (Rat).